Here is a 260-residue protein sequence, read N- to C-terminus: Scytalidopepsin B (260 aa).

Residues 1–20 (MKFTTAAVLSALVSAEIAFA) form the signal peptide. Positions 21 to 54 (APGGNGFARRQARRQARAAGLKASPFRQVNAKEA) are excised as a propeptide. A disulfide bond links Cys-101 and Cys-181. The active-site Proton acceptor is Glu-190. 2 disulfides stabilise this stretch: Cys-195/Cys-219 and Cys-248/Cys-257.

This sequence belongs to the peptidase G1 family. In terms of assembly, monomer.

It catalyses the reaction Hydrolysis of proteins with broad specificity, cleaving 24-Phe-|-Phe-25, but not 15-Leu-|-Tyr-16 and 25-Phe-|-Tyr-26 in the B chain of insulin.. This chain is Scytalidopepsin B, found in Scytalidium lignicola (Hyphomycete).